Consider the following 100-residue polypeptide: Urease subunit gamma (100 aa).

The protein belongs to the urease gamma subunit family. Heterotrimer of UreA (gamma), UreB (beta) and UreC (alpha) subunits. Three heterotrimers associate to form the active enzyme.

It is found in the cytoplasm. It catalyses the reaction urea + 2 H2O + H(+) = hydrogencarbonate + 2 NH4(+). It participates in nitrogen metabolism; urea degradation; CO(2) and NH(3) from urea (urease route): step 1/1. The protein is Urease subunit gamma of Haemophilus influenzae (strain 86-028NP).